The sequence spans 663 residues: Cyclic nucleotide-gated channel alpha-2 (663 aa).

Residues 1–61 (MTEKANGVKS…QLAEMDAPQQ (61 aa)) are disordered. At 1-144 (MTEKANGVKS…PAGDWYYRWL (144 aa)) the chain is on the cytoplasmic side. Residues 12–23 (PANNHNHHAPPA) show a composition bias toward low complexity. The chain crosses the membrane as a helical span at residues 145-166 (FLIALPVLYNWCLLVARACFSD). Residues 167-176 (LQKGYYIVWL) are Extracellular-facing. The helical transmembrane segment at 177–197 (VLDYVSDVVYIADLFIRLRTG) threads the bilayer. The Cytoplasmic portion of the chain corresponds to 198-222 (FLEQGLLVKDTKKLRDNYIHTMQFK). The chain crosses the membrane as a helical span at residues 223-241 (LDVASIIPTDLIYFAVGIH). The Extracellular portion of the chain corresponds to 242–246 (NPEVR). A helical membrane pass occupies residues 247–265 (FNRLLHFARMFEFFDRTET). Residues 266 to 272 (RTSYPNI) are Cytoplasmic-facing. The segment at 270-378 (PNIFRISNLI…GNVGSMISNM (109 aa)) is ion conduction pathway. Residues 273–296 (FRISNLILYILIIIHWNACIYYAI) form a helical membrane-spanning segment. The Extracellular portion of the chain corresponds to 297 to 319 (SKSIGFGVDTWVYPNITDPEYGY). Transmembrane regions (helical) follow at residues 320 to 354 (LSREYIYCLYWSTLTLTTIGETPPPVKDEEYLFVI) and 355 to 379 (FDFLIGVLIFATIVGNVGSMISNMN). The segment at 337–340 (TIGE) is selectivity filter. Positions 380-456 (ATRAEFQAKI…STLKKVRIFQ (77 aa)) are C-linker. Over 380 to 663 (ATRAEFQAKI…NSPEPPAEKP (284 aa)) the chain is Cytoplasmic. Residues 460-580 (AGLLVELVLK…EERGREILMK (121 aa)) form a cyclic nucleotide-binding domain region. The 3',5'-cyclic GMP site is built by G520, S523, R536, and T537. 3',5'-cyclic AMP is bound by residues R536 and T537. A coiled-coil region spans residues 597-651 (VQEKLEQLETNMDTLYTRFARLLAEYTGAQQKLKQRITVLETKMKQNNEDDSLSD). Residues 640 to 663 (MKQNNEDDSLSDGMNSPEPPAEKP) form a disordered region.

It belongs to the cyclic nucleotide-gated cation channel (TC 1.A.1.5) family. CNGA2 subfamily. In terms of assembly, the olfactory cyclic nucleotide-gated channel is an heterotetramer composed of CNGA2, CNGA4 and CNGB1b subunits with 2:1:1 stoichiometry. Olfactory neurons.

Its subcellular location is the cell projection. The protein localises to the cilium membrane. The catalysed reaction is Ca(2+)(in) = Ca(2+)(out). The enzyme catalyses Na(+)(in) = Na(+)(out). It carries out the reaction K(+)(in) = K(+)(out). It catalyses the reaction NH4(+)(in) = NH4(+)(out). The catalysed reaction is Rb(+)(in) = Rb(+)(out). The enzyme catalyses Li(+)(in) = Li(+)(out). It carries out the reaction Cs(+)(in) = Cs(+)(out). Its function is as follows. Pore-forming subunit of the olfactory cyclic nucleotide-gated channel. Operates in the cilia of olfactory sensory neurons where chemical stimulation of the odorant is converted to an electrical signal. Mediates odorant-induced cAMP-dependent Ca(2+) influx triggering neuron depolarization. The rise of intracellular Ca(2+) levels potentiates the olfactory response by activating Ca(2+)-dependent Cl(-) channels, but it also serves as a negative feedback signal to desensitize the channel for rapid adaptation to odorants. Conducts cAMP- and cGMP-gated ion currents, with permeability for monovalent and divalent cations. This is Cyclic nucleotide-gated channel alpha-2 from Bos taurus (Bovine).